A 74-amino-acid chain; its full sequence is MAINSKYQDKQVDEILKDIIEVLEKHKAPVDLSLVVLGNMVTNLLTSSVGANQRTVLAQAFSDALLNSVKTKHH.

This sequence belongs to the UPF0352 family.

This chain is UPF0352 protein MS1910, found in Mannheimia succiniciproducens (strain KCTC 0769BP / MBEL55E).